We begin with the raw amino-acid sequence, 545 residues long: 2-succinyl-5-enolpyruvyl-6-hydroxy-3-cyclohexene-1-carboxylate synthase (545 aa).

It belongs to the TPP enzyme family. MenD subfamily. Homodimer. Requires Mg(2+) as cofactor. Mn(2+) serves as cofactor. It depends on thiamine diphosphate as a cofactor.

It catalyses the reaction isochorismate + 2-oxoglutarate + H(+) = 5-enolpyruvoyl-6-hydroxy-2-succinyl-cyclohex-3-ene-1-carboxylate + CO2. Its pathway is quinol/quinone metabolism; 1,4-dihydroxy-2-naphthoate biosynthesis; 1,4-dihydroxy-2-naphthoate from chorismate: step 2/7. It functions in the pathway quinol/quinone metabolism; menaquinone biosynthesis. Catalyzes the thiamine diphosphate-dependent decarboxylation of 2-oxoglutarate and the subsequent addition of the resulting succinic semialdehyde-thiamine pyrophosphate anion to isochorismate to yield 2-succinyl-5-enolpyruvyl-6-hydroxy-3-cyclohexene-1-carboxylate (SEPHCHC). The sequence is that of 2-succinyl-5-enolpyruvyl-6-hydroxy-3-cyclohexene-1-carboxylate synthase from Nocardia farcinica (strain IFM 10152).